Reading from the N-terminus, the 198-residue chain is NADH-quinone oxidoreductase subunit I (198 aa).

2 consecutive 4Fe-4S ferredoxin-type domains span residues 42–72 (LNRW…VEGA) and 88–117 (RVYE…MTND). The [4Fe-4S] cluster site is built by Cys52, Cys55, Cys58, Cys62, Cys97, Cys100, Cys103, and Cys107. Residues 137–198 (APLKEGMEQP…DTQHKDEEAA (62 aa)) are disordered. The segment covering 182-198 (AHRDDDNDTQHKDEEAA) has biased composition (basic and acidic residues).

It belongs to the complex I 23 kDa subunit family. NDH-1 is composed of 14 different subunits. Subunits NuoA, H, J, K, L, M, N constitute the membrane sector of the complex. [4Fe-4S] cluster is required as a cofactor.

It is found in the cell membrane. It carries out the reaction a quinone + NADH + 5 H(+)(in) = a quinol + NAD(+) + 4 H(+)(out). NDH-1 shuttles electrons from NADH, via FMN and iron-sulfur (Fe-S) centers, to quinones in the respiratory chain. The immediate electron acceptor for the enzyme in this species is believed to be ubiquinone. Couples the redox reaction to proton translocation (for every two electrons transferred, four hydrogen ions are translocated across the cytoplasmic membrane), and thus conserves the redox energy in a proton gradient. In Cutibacterium acnes (strain DSM 16379 / KPA171202) (Propionibacterium acnes), this protein is NADH-quinone oxidoreductase subunit I.